Consider the following 245-residue polypeptide: Uridylate kinase (245 aa).

15–18 contacts ATP; sequence KLSG. The segment at 23-28 is involved in allosteric activation by GTP; that stretch reads GDEGFG. G57 is a binding site for UMP. ATP is bound by residues G58 and R62. UMP is bound by residues D77 and 138-145; that span reads TGNPFCTT. Residues T165, Y171, and D174 each contribute to the ATP site.

This sequence belongs to the UMP kinase family. As to quaternary structure, homohexamer.

It is found in the cytoplasm. The catalysed reaction is UMP + ATP = UDP + ADP. It participates in pyrimidine metabolism; CTP biosynthesis via de novo pathway; UDP from UMP (UMPK route): step 1/1. With respect to regulation, allosterically activated by GTP. Inhibited by UTP. Its function is as follows. Catalyzes the reversible phosphorylation of UMP to UDP. This chain is Uridylate kinase, found in Shewanella baltica (strain OS155 / ATCC BAA-1091).